Reading from the N-terminus, the 152-residue chain is Deoxyuridine 5'-triphosphate nucleotidohydrolase (152 aa).

Substrate is bound by residues 72–74 (RSG), N85, and 89–91 (TID).

It belongs to the dUTPase family. Mg(2+) serves as cofactor.

The catalysed reaction is dUTP + H2O = dUMP + diphosphate + H(+). It functions in the pathway pyrimidine metabolism; dUMP biosynthesis; dUMP from dCTP (dUTP route): step 2/2. This enzyme is involved in nucleotide metabolism: it produces dUMP, the immediate precursor of thymidine nucleotides and it decreases the intracellular concentration of dUTP so that uracil cannot be incorporated into DNA. The chain is Deoxyuridine 5'-triphosphate nucleotidohydrolase from Bradyrhizobium sp. (strain ORS 278).